The primary structure comprises 95 residues: Aspartyl/glutamyl-tRNA(Asn/Gln) amidotransferase subunit C (95 aa).

It belongs to the GatC family. As to quaternary structure, heterotrimer of A, B and C subunits.

The catalysed reaction is L-glutamyl-tRNA(Gln) + L-glutamine + ATP + H2O = L-glutaminyl-tRNA(Gln) + L-glutamate + ADP + phosphate + H(+). It carries out the reaction L-aspartyl-tRNA(Asn) + L-glutamine + ATP + H2O = L-asparaginyl-tRNA(Asn) + L-glutamate + ADP + phosphate + 2 H(+). In terms of biological role, allows the formation of correctly charged Asn-tRNA(Asn) or Gln-tRNA(Gln) through the transamidation of misacylated Asp-tRNA(Asn) or Glu-tRNA(Gln) in organisms which lack either or both of asparaginyl-tRNA or glutaminyl-tRNA synthetases. The reaction takes place in the presence of glutamine and ATP through an activated phospho-Asp-tRNA(Asn) or phospho-Glu-tRNA(Gln). The chain is Aspartyl/glutamyl-tRNA(Asn/Gln) amidotransferase subunit C from Lysinibacillus sphaericus (strain C3-41).